Here is a 481-residue protein sequence, read N- to C-terminus: E3 ubiquitin-protein ligase makorin-1 (481 aa).

3 consecutive C3H1-type zinc fingers follow at residues 55–82, 84–111, and 208–235; these read WTKQ…HDLS, SPYG…HSKP, and ETKK…HGDS. Residues 236–263 form a makorin-type Cys-His region; the sequence is CDMCGLQVLHPVDAAQRSQHIKSCIEAH. The segment at 281–335 adopts an RING-type zinc-finger fold; that stretch reads CGICMEVVYEKANPSERRFGILSNCNHTYCLKCIRKWRSAKQFESKIIKSCPECR. The C3H1-type 4 zinc-finger motif lies at 364–393; it reads AMSNKACRYFDEGRGSCPFGGNCFYKHAYP.

As to quaternary structure, interacts with p53/TP53 and CDKN1A. Interacts with TERT, modulating telomere length homeostasis. Post-translationally, auto-ubiquitinated; which leads to proteasomal degradation. In terms of tissue distribution, highly expressed in embryo, in specific cell types of the central nervous system, in brain with the strongest levels of expression in the mantle layers and in testis. Moderate to low levels in somatic tissues.

It catalyses the reaction S-ubiquitinyl-[E2 ubiquitin-conjugating enzyme]-L-cysteine + [acceptor protein]-L-lysine = [E2 ubiquitin-conjugating enzyme]-L-cysteine + N(6)-ubiquitinyl-[acceptor protein]-L-lysine.. It participates in protein modification; protein ubiquitination. E3 ubiquitin ligase catalyzing the covalent attachment of ubiquitin moieties onto substrate proteins. These substrates include FILIP1, p53/TP53, CDKN1A and TERT. Keeps cells alive by suppressing p53/TP53 under normal conditions, but stimulates apoptosis by repressing CDKN1A under stress conditions. Acts as a negative regulator of telomerase. Has negative and positive effects on RNA polymerase II-dependent transcription. The polypeptide is E3 ubiquitin-protein ligase makorin-1 (Mkrn1) (Mus musculus (Mouse)).